Consider the following 514-residue polypeptide: 2,3-bisphosphoglycerate-independent phosphoglycerate mutase (514 aa).

Residues aspartate 14 and serine 64 each contribute to the Mn(2+) site. The active-site Phosphoserine intermediate is the serine 64. Substrate-binding positions include histidine 125, 155–156 (RD), arginine 187, arginine 193, 263–266 (RADR), and lysine 337. Aspartate 404, histidine 408, aspartate 445, histidine 446, and histidine 464 together coordinate Mn(2+).

The protein belongs to the BPG-independent phosphoglycerate mutase family. Monomer. Mn(2+) is required as a cofactor.

It carries out the reaction (2R)-2-phosphoglycerate = (2R)-3-phosphoglycerate. The protein operates within carbohydrate degradation; glycolysis; pyruvate from D-glyceraldehyde 3-phosphate: step 3/5. Catalyzes the interconversion of 2-phosphoglycerate and 3-phosphoglycerate. This is 2,3-bisphosphoglycerate-independent phosphoglycerate mutase from Pseudoalteromonas translucida (strain TAC 125).